A 112-amino-acid chain; its full sequence is Beta-defensin 126 (112 aa).

An N-terminal signal peptide occupies residues 1-20; sequence MKSLLFTLAVFMLLAQLVSG. The segment at 21–63 is in vitro binds to LPS, mediates antimicrobial activity and inhibits LPS-mediated inflammation; the sequence is NWYVKKCLNDVGICKKKCKPEELHVKNGRAMCGKQRDCCVPAD. 3 cysteine pairs are disulfide-bonded: C27–C58, C34–C52, and C38–C59.

It belongs to the beta-defensin family. Homodimer or homooligomer; disulfide-linked. Post-translationally, O-glycosylated; glycans contain alpha(2,3)-linked sialic acids.

It localises to the secreted. In terms of biological role, highly glycosylated atypical beta-defensin involved in several aspects of sperm function. Facilitates sperm transport in the female reproductive tract and contributes to sperm protection against immunodetection; both functions are probably implicating the negative surface charge provided by its O-linked oligosaccharides in the sperm glycocalyx. Involved in binding of sperm to oviductal epithelial cells to form a sperm reservoir until ovulation. Release from the sperm surface during capacitation and ovaluation by an elevation of oviductal fluid pH is unmasking other surface components and allows sperm to penetrate the cumulus matrix and bind to the zona pellucida of the oocyte. In vitro has antimicrobial activity and may inhibit LPS-mediated inflammation. This Hylobates lar (Lar gibbon) protein is Beta-defensin 126 (DEFB126).